Reading from the N-terminus, the 367-residue chain is 3-dehydroquinate synthase (367 aa).

NAD(+) is bound by residues 69-74 (DGEAFK), 103-107 (GVIGD), 127-128 (TT), Lys140, and Lys149. Zn(2+) contacts are provided by Glu182, His245, and His262.

The protein belongs to the sugar phosphate cyclases superfamily. Dehydroquinate synthase family. NAD(+) is required as a cofactor. Requires Co(2+) as cofactor. The cofactor is Zn(2+).

Its subcellular location is the cytoplasm. The catalysed reaction is 7-phospho-2-dehydro-3-deoxy-D-arabino-heptonate = 3-dehydroquinate + phosphate. Its pathway is metabolic intermediate biosynthesis; chorismate biosynthesis; chorismate from D-erythrose 4-phosphate and phosphoenolpyruvate: step 2/7. Its function is as follows. Catalyzes the conversion of 3-deoxy-D-arabino-heptulosonate 7-phosphate (DAHP) to dehydroquinate (DHQ). This chain is 3-dehydroquinate synthase, found in Pseudomonas syringae pv. tomato (strain ATCC BAA-871 / DC3000).